Reading from the N-terminus, the 552-residue chain is Non-structural protein NS1 (552 aa).

It belongs to the orbivirus non-structural protein NS1 family.

The polypeptide is Non-structural protein NS1 (Segment-5) (Bluetongue virus 1 (isolate Australia) (BTV 1)).